Reading from the N-terminus, the 154-residue chain is Endoribonuclease YbeY (154 aa).

Zn(2+) is bound by residues His118, His122, and His128.

It belongs to the endoribonuclease YbeY family. Requires Zn(2+) as cofactor.

The protein localises to the cytoplasm. Single strand-specific metallo-endoribonuclease involved in late-stage 70S ribosome quality control and in maturation of the 3' terminus of the 16S rRNA. This Chloroflexus aurantiacus (strain ATCC 29366 / DSM 635 / J-10-fl) protein is Endoribonuclease YbeY.